Here is a 462-residue protein sequence, read N- to C-terminus: beta-Tubulin at 65B (462 aa).

7 residues coordinate GTP: glutamate 70, serine 137, glycine 141, threonine 142, glycine 143, asparagine 203, and asparagine 225. Position 70 (glutamate 70) interacts with Mg(2+). The interval 420–462 is disordered; the sequence is DYRSSAEGEDSGGGGGGGGGRSGSAESGEEEATPEAHCQYCTE. The span at 430-441 shows a compositional bias: gly residues; it reads SGGGGGGGGGRS.

The protein belongs to the tubulin family. In terms of assembly, dimer of alpha and beta chains. A typical microtubule is a hollow water-filled tube with an outer diameter of 25 nm and an inner diameter of 15 nM. Alpha-beta heterodimers associate head-to-tail to form protofilaments running lengthwise along the microtubule wall with the beta-tubulin subunit facing the microtubule plus end conferring a structural polarity. Microtubules usually have 13 protofilaments but different protofilament numbers can be found in some organisms and specialized cells. The cofactor is Mg(2+).

The protein resides in the cytoplasm. It localises to the cytoskeleton. Tubulin is the major constituent of microtubules, a cylinder consisting of laterally associated linear protofilaments composed of alpha- and beta-tubulin heterodimers. Microtubules grow by the addition of GTP-tubulin dimers to the microtubule end, where a stabilizing cap forms. Below the cap, tubulin dimers are in GDP-bound state, owing to GTPase activity of alpha-tubulin. The protein is beta-Tubulin at 65B of Drosophila melanogaster (Fruit fly).